The sequence spans 133 residues: Profilin-2 (133 aa).

Cysteines 13 and 117 form a disulfide. Residues 83-99 carry the Involved in PIP2 interaction motif; that stretch reads AVIRGKKGSGGITIKKT. Phosphothreonine is present on T113.

This sequence belongs to the profilin family. As to quaternary structure, occurs in many kinds of cells as a complex with monomeric actin in a 1:1 ratio. Phosphorylated by MAP kinases.

The protein localises to the cytoplasm. It localises to the cytoskeleton. Its function is as follows. Binds to actin and affects the structure of the cytoskeleton. At high concentrations, profilin prevents the polymerization of actin, whereas it enhances it at low concentrations. The sequence is that of Profilin-2 from Betula pendula (European white birch).